The sequence spans 427 residues: Putative F-box protein At4g10740 (427 aa).

The F-box domain maps to 2-47 (RTTMSNLPKELVEDIVSRVPLHCLRAMRLTCKNWNALLESQSFKKM).

The chain is Putative F-box protein At4g10740 from Arabidopsis thaliana (Mouse-ear cress).